Consider the following 379-residue polypeptide: Alanine racemase (379 aa).

The Proton acceptor; specific for D-alanine role is filled by Lys-41. Residue Lys-41 is modified to N6-(pyridoxal phosphate)lysine. Arg-138 contributes to the substrate binding site. Catalysis depends on Tyr-260, which acts as the Proton acceptor; specific for L-alanine. A substrate-binding site is contributed by Met-319.

It belongs to the alanine racemase family. Requires pyridoxal 5'-phosphate as cofactor.

It carries out the reaction L-alanine = D-alanine. It functions in the pathway amino-acid biosynthesis; D-alanine biosynthesis; D-alanine from L-alanine: step 1/1. Functionally, catalyzes the interconversion of L-alanine and D-alanine. May also act on other amino acids. The chain is Alanine racemase (alr) from Rhizobium meliloti (strain 1021) (Ensifer meliloti).